We begin with the raw amino-acid sequence, 202 residues long: MAEFSTPVRSGEATEGDLRVPRAGAEGEFTHRSQGAIRARDWPGYGQGSEKSMFIGRHYRKKRALSLCAVRTTKKACKLLIVMWTPPRNDQHYLNWQWYSSILSSHAAMCGCPDAVAHFNHLASVLRAPQNPPPPGPQRNLPLRRLPALPAAPEAPGDRAPWPMAGGAEGEDGGAGGDADHGGAAGGPEDADLLDAVAAAET.

Disordered regions lie at residues Met1–Pro21 and Leu149–Thr202.

This is an uncharacterized protein from Torque teno virus 1 (isolate TA278).